The following is a 702-amino-acid chain: Kinesin-like protein KIF3A (702 aa).

The Kinesin motor domain maps to 14-345 (NVKVVVRCRP…LRYANRAKNI (332 aa)). 100–107 (GQTGTGKT) contributes to the ATP binding site. Positions 355 to 593 (PKDALLRQFQ…LSRELRLQML (239 aa)) form a coiled coil. Disordered regions lie at residues 372 to 424 (KKLE…KMIE) and 667 to 702 (LMKL…SLLQ). The segment covering 376–400 (EGEEISGSDISGSEEDDDEEGEIGE) has biased composition (acidic residues). Basic and acidic residues predominate over residues 410–424 (DQAGKKKVSPDKMIE). The segment at 600-702 (PRDYQEMIEN…PETVIDSLLQ (103 aa)) is globular. Positions 675–690 (TSKGKARPKTGRRKRS) are enriched in basic residues. Residue Ser690 is modified to Phosphoserine.

Belongs to the TRAFAC class myosin-kinesin ATPase superfamily. Kinesin family. Kinesin II subfamily. In terms of assembly, heterodimer of KIF3A and KIF3B. Interacts with CIMAP3. Interacts with CLN3. Interacts with DCTN1. Interacts with FLCN. Interacts with AP3B1.

The protein resides in the cytoplasm. It is found in the cytoskeleton. The protein localises to the cell projection. Its subcellular location is the cilium. It localises to the microtubule organizing center. The protein resides in the centrosome. It is found in the centriole. Functionally, microtubule-based anterograde translocator for membranous organelles. Plus end-directed microtubule sliding activity in vitro. Plays a role in primary cilia formation. Plays a role in centriole cohesion and subdistal appendage organization and function. Regulates the formation of the subdistal appendage via recruitment of DCTN1 to the centriole. Also required for ciliary basal feet formation and microtubule anchoring to mother centriole. This Pongo abelii (Sumatran orangutan) protein is Kinesin-like protein KIF3A (KIF3A).